The sequence spans 395 residues: Probable L-tyrosine/L-aspartate decarboxylase (395 aa).

Lys242 carries the N6-(pyridoxal phosphate)lysine modification.

The protein belongs to the group II decarboxylase family. MfnA subfamily. Pyridoxal 5'-phosphate is required as a cofactor.

It carries out the reaction L-tyrosine + H(+) = tyramine + CO2. The enzyme catalyses L-aspartate + H(+) = beta-alanine + CO2. It participates in cofactor biosynthesis; methanofuran biosynthesis. Its pathway is cofactor biosynthesis; coenzyme A biosynthesis. Its function is as follows. Catalyzes the decarboxylation of L-tyrosine to produce tyramine for methanofuran biosynthesis. Can also catalyze the decarboxylation of L-aspartate to produce beta-alanine for coenzyme A (CoA) biosynthesis. The polypeptide is Probable L-tyrosine/L-aspartate decarboxylase (Methanosarcina acetivorans (strain ATCC 35395 / DSM 2834 / JCM 12185 / C2A)).